The sequence spans 84 residues: Cell division topological specificity factor (84 aa).

The protein belongs to the MinE family.

Functionally, prevents the cell division inhibition by proteins MinC and MinD at internal division sites while permitting inhibition at polar sites. This ensures cell division at the proper site by restricting the formation of a division septum at the midpoint of the long axis of the cell. This is Cell division topological specificity factor from Burkholderia multivorans (strain ATCC 17616 / 249).